The chain runs to 183 residues: Ferritin heavy chain (183 aa).

Residue Met1 is modified to N-acetylmethionine. Position 2 is an N-acetylthreonine; in Ferritin heavy chain, N-terminally processed (Thr2). The Ferritin-like diiron domain maps to 11–160 (QNYHQDSEAA…DHVTNLRKMG (150 aa)). Positions 28, 63, 66, 108, and 142 each coordinate Fe cation. Phosphoserine occurs at positions 179 and 183.

This sequence belongs to the ferritin family. Oligomer of 24 subunits. There are two types of subunits: L (light) chain and H (heavy) chain. The major chain can be light or heavy, depending on the species and tissue type. In the human liver, the heavy chain is predominant. The functional molecule forms a roughly spherical shell with a diameter of 12 nm and contains a central cavity into which the insoluble mineral iron core is deposited. Interacts with NCOA4; NCOA4 promotes targeting of the iron-binding ferritin complex to autolysosomes following starvation or iron depletion. As to expression, expressed in the liver.

It is found in the cytoplasm. The protein localises to the lysosome. The protein resides in the cytoplasmic vesicle. It localises to the autophagosome. It carries out the reaction 4 Fe(2+) + O2 + 4 H(+) = 4 Fe(3+) + 2 H2O. Stores iron in a soluble, non-toxic, readily available form. Important for iron homeostasis. Has ferroxidase activity. Iron is taken up in the ferrous form and deposited as ferric hydroxides after oxidation. Also plays a role in delivery of iron to cells. Mediates iron uptake in capsule cells of the developing kidney. Delivery to lysosomes is mediated by the cargo receptor NCOA4 for autophagic degradation and release of iron. The polypeptide is Ferritin heavy chain (FTH1) (Homo sapiens (Human)).